A 330-amino-acid polypeptide reads, in one-letter code: DNA-directed RNA polymerase subunit alpha (330 aa).

The alpha N-terminal domain (alpha-NTD) stretch occupies residues 1–231 (MQTNLLKPKT…EQLAVFAQLE (231 aa)). Residues 250–330 (FDPILLRPVD…NWPPAGLDKR (81 aa)) are alpha C-terminal domain (alpha-CTD).

The protein belongs to the RNA polymerase alpha chain family. In terms of assembly, homodimer. The RNAP catalytic core consists of 2 alpha, 1 beta, 1 beta' and 1 omega subunit. When a sigma factor is associated with the core the holoenzyme is formed, which can initiate transcription.

The enzyme catalyses RNA(n) + a ribonucleoside 5'-triphosphate = RNA(n+1) + diphosphate. Functionally, DNA-dependent RNA polymerase catalyzes the transcription of DNA into RNA using the four ribonucleoside triphosphates as substrates. This chain is DNA-directed RNA polymerase subunit alpha, found in Paracidovorax citrulli (strain AAC00-1) (Acidovorax citrulli).